Here is a 315-residue protein sequence, read N- to C-terminus: tRNA-cytidine(32) 2-sulfurtransferase (315 aa).

The PP-loop motif signature appears at 39–44 (SGGKDS). 3 residues coordinate [4Fe-4S] cluster: cysteine 114, cysteine 117, and cysteine 205.

Belongs to the TtcA family. Homodimer. Mg(2+) serves as cofactor. Requires [4Fe-4S] cluster as cofactor.

Its subcellular location is the cytoplasm. The catalysed reaction is cytidine(32) in tRNA + S-sulfanyl-L-cysteinyl-[cysteine desulfurase] + AH2 + ATP = 2-thiocytidine(32) in tRNA + L-cysteinyl-[cysteine desulfurase] + A + AMP + diphosphate + H(+). Its pathway is tRNA modification. Catalyzes the ATP-dependent 2-thiolation of cytidine in position 32 of tRNA, to form 2-thiocytidine (s(2)C32). The sulfur atoms are provided by the cysteine/cysteine desulfurase (IscS) system. The chain is tRNA-cytidine(32) 2-sulfurtransferase from Ralstonia pickettii (strain 12J).